The sequence spans 506 residues: Galactose/methyl galactoside import ATP-binding protein MglA (506 aa).

ABC transporter domains lie at 14–249 (LTMT…VGRE) and 260–506 (TPKE…AKYL). 46–53 (GENGAGKS) is an ATP binding site.

Belongs to the ABC transporter superfamily. Galactose/methyl galactoside importer (TC 3.A.1.2.3) family. The complex is composed of one ATP-binding protein (MglA), two transmembrane proteins (MglC) and a solute-binding protein (MglB).

It is found in the cell inner membrane. The enzyme catalyses D-galactose(out) + ATP + H2O = D-galactose(in) + ADP + phosphate + H(+). It catalyses the reaction methyl beta-D-galactoside(out) + ATP + H2O = methyl beta-D-galactoside(in) + ADP + phosphate + H(+). In terms of biological role, part of the ABC transporter complex MglABC involved in galactose/methyl galactoside import. Responsible for energy coupling to the transport system. The sequence is that of Galactose/methyl galactoside import ATP-binding protein MglA from Pasteurella multocida (strain Pm70).